The sequence spans 316 residues: Ribose-phosphate pyrophosphokinase (316 aa).

Residues 39–41 (DGE) and 98–99 (RQ) each bind ATP. Residues histidine 133 and aspartate 172 each contribute to the Mg(2+) site. Lysine 195 is a catalytic residue. Residues arginine 197, aspartate 221, and 225-229 (DTANT) each bind D-ribose 5-phosphate.

The protein belongs to the ribose-phosphate pyrophosphokinase family. Class I subfamily. As to quaternary structure, homohexamer. The cofactor is Mg(2+).

It is found in the cytoplasm. The catalysed reaction is D-ribose 5-phosphate + ATP = 5-phospho-alpha-D-ribose 1-diphosphate + AMP + H(+). Its pathway is metabolic intermediate biosynthesis; 5-phospho-alpha-D-ribose 1-diphosphate biosynthesis; 5-phospho-alpha-D-ribose 1-diphosphate from D-ribose 5-phosphate (route I): step 1/1. Its function is as follows. Involved in the biosynthesis of the central metabolite phospho-alpha-D-ribosyl-1-pyrophosphate (PRPP) via the transfer of pyrophosphoryl group from ATP to 1-hydroxyl of ribose-5-phosphate (Rib-5-P). The polypeptide is Ribose-phosphate pyrophosphokinase (Nitrosomonas europaea (strain ATCC 19718 / CIP 103999 / KCTC 2705 / NBRC 14298)).